The following is a 157-amino-acid chain: Protein Smg homolog (157 aa).

It belongs to the Smg family.

The chain is Protein Smg homolog from Shewanella halifaxensis (strain HAW-EB4).